We begin with the raw amino-acid sequence, 119 residues long: Hemerythrin subunit B (119 aa).

Fe cation-binding residues include His-26, His-55, Glu-59, His-74, His-78, His-107, and Asp-112.

Belongs to the hemerythrin family.

In terms of biological role, hemerythrin is a respiratory protein in blood cells of certain marine worms. The oxygen-binding site in each chain contains two iron atoms. This is Hemerythrin subunit B from Sipunculus nudus (Sipunculan worm).